The chain runs to 491 residues: Glutamyl-tRNA(Gln) amidotransferase subunit A (491 aa).

Catalysis depends on charge relay system residues K81 and S156. The active-site Acyl-ester intermediate is the S180.

Belongs to the amidase family. GatA subfamily. Heterotrimer of A, B and C subunits.

The enzyme catalyses L-glutamyl-tRNA(Gln) + L-glutamine + ATP + H2O = L-glutaminyl-tRNA(Gln) + L-glutamate + ADP + phosphate + H(+). In terms of biological role, allows the formation of correctly charged Gln-tRNA(Gln) through the transamidation of misacylated Glu-tRNA(Gln) in organisms which lack glutaminyl-tRNA synthetase. The reaction takes place in the presence of glutamine and ATP through an activated gamma-phospho-Glu-tRNA(Gln). The chain is Glutamyl-tRNA(Gln) amidotransferase subunit A from Alcanivorax borkumensis (strain ATCC 700651 / DSM 11573 / NCIMB 13689 / SK2).